The chain runs to 1007 residues: RNA-binding protein 26 (1007 aa).

A Glycyl lysine isopeptide (Lys-Gly) (interchain with G-Cter in SUMO2) cross-link involves residue K94. K106 participates in a covalent cross-link: Glycyl lysine isopeptide (Lys-Gly) (interchain with G-Cter in SUMO1); alternate. A Glycyl lysine isopeptide (Lys-Gly) (interchain with G-Cter in SUMO2); alternate cross-link involves residue K106. Basic and acidic residues predominate over residues 106-118 (KKEEITKEEEREK). Residues 106–241 (KKEEITKEEE…YTPVSSVPSI (136 aa)) are disordered. Position 127 is a phosphoserine (S127). Basic and acidic residues predominate over residues 134–168 (RYRENRSRDERKKDDRSRKRDYDRNPPRRDSYRDR). The segment covering 169-186 (YNRRRGRSRSYSRSRSRS) has biased composition (basic residues). Basic and acidic residues-rich tracts occupy residues 187–201 (WSKERLRERDRDRSR) and 209–227 (RSRERDLVKPKYDLDRTDP). Residues 228 to 241 (LENNYTPVSSVPSI) are compositionally biased toward polar residues. Residues 288–316 (PMPKKRCRDYDEKGFCMRGDMCPFDHGSD) form a C3H1-type zinc finger. Over residues 334-388 (QPPVVEGPPPPGLPPPPPILTPPPVNLRPPVPPPGPLPPSLPPVTGPPPPLPPLQ) the composition is skewed to pro residues. 2 disordered regions span residues 334 to 404 (QPPV…SSVP) and 460 to 519 (IGLT…TNSP). The segment covering 394–404 (APPNSATSSVP) has biased composition (low complexity). Residue S496 is modified to Phosphoserine. N6-acetyllysine is present on K510. Residue S518 is modified to Phosphoserine. The 75-residue stretch at 532 to 606 (TKLELRKVPP…RFIKVYWHRE (75 aa)) folds into the RRM 1 domain. At S616 the chain carries Phosphoserine. Coiled coils occupy residues 719 to 795 (DNNE…KAAS) and 823 to 847 (KKMQAGEEVTELRRKYTELQLEAAK). The segment at 853-884 (SGRGRGIHSRGRGAVHGRGRGRGRGRGVPGHA) is disordered. Residues 857-877 (RGIHSRGRGAVHGRGRGRGRG) show a composition bias toward basic residues. The 70-residue stretch at 891-960 (RALEISAFTE…QDLKLAWNKP (70 aa)) folds into the RRM 2 domain. Residues 966–1007 (AVETEEVEPDEEEFQEESLVDDSLLQDDDEEEEDNESRSWRR) are disordered. The span at 968 to 1000 (ETEEVEPDEEEFQEESLVDDSLLQDDDEEEEDN) shows a compositional bias: acidic residues.

Functionally, may be involved in the turnover of nuclear polyadenylated (pA+) RNA. The chain is RNA-binding protein 26 from Homo sapiens (Human).